We begin with the raw amino-acid sequence, 716 residues long: DNA replication licensing factor MCM7 (716 aa).

A C4-type zinc finger spans residues 178–205; it reads CEDCGHEIYQEVTSRVFMPLFKCPSSRC. Residues 326–531 enclose the MCM domain; that stretch reads IYNKLSRSLA…MDSDLELAKH (206 aa). 376 to 383 serves as a coordination point for ATP; the sequence is GDPGVAKS. The Arginine finger motif lies at 508–511; that stretch reads SRFD.

The protein belongs to the MCM family. In terms of assembly, component of the minichromosome maintenance (MCM) complex, a heterotetramer composed of MCM2, MCM3, MCM4, MCM5, MCM6 and MCM7. Interacts with ETG1. As to expression, expressed in shoot apex and flower buds.

The protein localises to the nucleus. It localises to the cytoplasm. The enzyme catalyses ATP + H2O = ADP + phosphate + H(+). Functionally, probable component of the MCM2-7 complex (MCM complex) that may function as a DNA helicase and which is essential to undergo a single round of replication initiation and elongation per cell cycle in eukaryotic cells. Required for megagametophyte and embryo development. This Arabidopsis thaliana (Mouse-ear cress) protein is DNA replication licensing factor MCM7 (MCM7).